A 506-amino-acid chain; its full sequence is Acyl-CoA-binding domain-containing protein 5 (506 aa).

The 90-residue stretch at 44–133 folds into the ACB domain; sequence YETRFEAAVK…MKKIIETMPM (90 aa). Residues 55–64, 75–79, Lys101, and Tyr120 each bind an acyl-CoA; these read IQSLPKNGSF and YSFYK. A disordered region spans residues 175–217; that stretch reads AKAVNGKAESSDSGAESEEEEAQEELKGAEQSGSDDKKMMTKS. A coiled-coil region spans residues 181–209; sequence KAESSDSGAESEEEEAQEELKGAEQSGSD. A phosphoserine mark is found at Ser184, Ser185, Ser187, Ser191, Ser206, and Ser233. Over residues 198–217 the composition is skewed to basic and acidic residues; it reads EELKGAEQSGSDDKKMMTKS. Disordered stretches follow at residues 234-302 and 345-417; these read FAQD…CDSM and AVKG…RGSR. Residues 238–257 show a composition bias toward basic and acidic residues; sequence SDIHTDSSRSARRSEDKKPT. Residues 258-267 are compositionally biased toward polar residues; that stretch reads DQSSQQTGNT. Residue Ser301 is modified to Phosphoserine. A compositionally biased stretch (basic and acidic residues) spans 348–360; the sequence is GKGEVKHGGEDGR. The residue at position 403 (Ser403) is a Phosphoserine. Basic and acidic residues predominate over residues 406 to 416; sequence DGERWGSDRGS. A coiled-coil region spans residues 426 to 451; it reads LVLIRLQEDMQNVLQRLHKLETLTAS. Lys444 is modified (N6-acetyllysine). A helical transmembrane segment spans residues 478 to 498; the sequence is GALAFAIIWPFIAQWLVHLYY.

The protein belongs to the ATG37 family.

Its subcellular location is the peroxisome membrane. Functionally, acyl-CoA binding protein which acts as the peroxisome receptor for pexophagy but is dispensable for aggrephagy and nonselective autophagy. Binds medium- and long-chain acyl-CoA esters. In Rattus norvegicus (Rat), this protein is Acyl-CoA-binding domain-containing protein 5 (Acbd5).